Consider the following 397-residue polypeptide: Pyridinium-3,5-bisthiocarboxylic acid mononucleotide nickel insertion protein (397 aa).

This sequence belongs to the LarC family.

The enzyme catalyses Ni(II)-pyridinium-3,5-bisthiocarboxylate mononucleotide = pyridinium-3,5-bisthiocarboxylate mononucleotide + Ni(2+). Functionally, involved in the biosynthesis of a nickel-pincer cofactor ((SCS)Ni(II) pincer complex). Binds Ni(2+), and functions in nickel delivery to pyridinium-3,5-bisthiocarboxylic acid mononucleotide (P2TMN), to form the mature cofactor. Is thus probably required for the activation of nickel-pincer cofactor-dependent enzymes. The chain is Pyridinium-3,5-bisthiocarboxylic acid mononucleotide nickel insertion protein from Thermotoga petrophila (strain ATCC BAA-488 / DSM 13995 / JCM 10881 / RKU-1).